Consider the following 222-residue polypeptide: Thiopurine S-methyltransferase (222 aa).

S-adenosyl-L-methionine contacts are provided by tryptophan 10, leucine 45, glutamate 66, and arginine 124.

It belongs to the class I-like SAM-binding methyltransferase superfamily. TPMT family.

The protein localises to the cytoplasm. The enzyme catalyses S-adenosyl-L-methionine + a thiopurine = S-adenosyl-L-homocysteine + a thiopurine S-methylether.. The chain is Thiopurine S-methyltransferase from Methylococcus capsulatus (strain ATCC 33009 / NCIMB 11132 / Bath).